The sequence spans 521 residues: Cytochrome P450 monooxygenase 105 (521 aa).

A helical transmembrane segment spans residues 12–32 (GVASPATLAVAAVTFLTALVL). Residues asparagine 218, asparagine 274, and asparagine 317 are each glycosylated (N-linked (GlcNAc...) asparagine). Residue cysteine 449 coordinates heme.

This sequence belongs to the cytochrome P450 family. Requires heme as cofactor.

The protein resides in the membrane. The protein operates within secondary metabolite biosynthesis. Functionally, cytochrome P450 monooxygenase that is able to use anthracene, carbazole, pyrene, phenanthrene and trans-stilbene as substrates for oxidation. These multifunctional properties against a series of polycyclic aromatic hydrocarbons (PAHs) suggest that CYP105 would play important roles, at least in part, in fungal metabolic systems involved in xenobiotic detoxification. The protein is Cytochrome P450 monooxygenase 105 of Postia placenta (strain ATCC 44394 / Madison 698-R) (Brown rot fungus).